The chain runs to 210 residues: Protein HEADING DATE REPRESSOR 1 (210 aa).

The interval 1–97 (MEEPASADPP…GKRSSAEMLL (97 aa)) is disordered. The stretch at 29 to 49 (QQELNKEAADEQLNNQAHEEA) forms a coiled coil. 2 stretches are compositionally biased toward basic and acidic residues: residues 45 to 54 (AHEEAMKIDD) and 62 to 79 (DDVH…RKAL). A coiled-coil region spans residues 129–184 (RRIAIQEMNRKDREINGLNEQLEEDSRVLELLQKQLADERKKRTEIEKENSMLHEQ).

As to quaternary structure, interacts with OSK3 and OSK4. As to expression, mostly expressed in leaves, seedlings and floral organs, and, to a lower extent, in panicle, roots, nodes, internodes, leaf joint and sheath.

The protein localises to the nucleus. Functionally, regulates flowering time via a photoperiod-dependent pathway. Suppressor of flowering that upregulates HD1 and down-regulates EHD1 in long days (LD), thus leading to the down-regulation of HD3A and RFT1. Triggers OSK4-mediated HD1 phosphorylation. This Oryza sativa subsp. japonica (Rice) protein is Protein HEADING DATE REPRESSOR 1.